The chain runs to 701 residues: Polyribonucleotide nucleotidyltransferase (701 aa).

Mg(2+) is bound by residues D487 and D493. Residues P554 to V613 enclose the KH domain. An S1 motif domain is found at G623–K691.

Belongs to the polyribonucleotide nucleotidyltransferase family. In terms of assembly, component of the RNA degradosome, which is a multiprotein complex involved in RNA processing and mRNA degradation. Requires Mg(2+) as cofactor.

It localises to the cytoplasm. The catalysed reaction is RNA(n+1) + phosphate = RNA(n) + a ribonucleoside 5'-diphosphate. Involved in mRNA degradation. Catalyzes the phosphorolysis of single-stranded polyribonucleotides processively in the 3'- to 5'-direction. This chain is Polyribonucleotide nucleotidyltransferase, found in Pseudomonas putida (strain W619).